The sequence spans 434 residues: UDP-glucose 6-dehydrogenase (434 aa).

Residues 2–19 (NITF…GIIM), Val-11, Asp-30, Lys-35, Thr-121, and Glu-152 each bind NAD(+). Residues 148-152 (EFLRE), Lys-204, Asn-208, 249-253 (FLNAG), and Gly-257 contribute to the substrate site. Cys-260 functions as the Nucleophile in the catalytic mechanism. Lys-263 lines the NAD(+) pocket. A substrate-binding site is contributed by Lys-321. Residue Arg-328 coordinates NAD(+).

The protein belongs to the UDP-glucose/GDP-mannose dehydrogenase family.

It catalyses the reaction UDP-alpha-D-glucose + 2 NAD(+) + H2O = UDP-alpha-D-glucuronate + 2 NADH + 3 H(+). It functions in the pathway nucleotide-sugar biosynthesis; UDP-alpha-D-glucuronate biosynthesis; UDP-alpha-D-glucuronate from UDP-alpha-D-glucose: step 1/1. In Rickettsia typhi (strain ATCC VR-144 / Wilmington), this protein is UDP-glucose 6-dehydrogenase (udg).